The following is a 158-amino-acid chain: Regulator of sigma D (158 aa).

The protein belongs to the Rsd/AlgQ family. Interacts with RpoD.

It is found in the cytoplasm. Functionally, binds RpoD and negatively regulates RpoD-mediated transcription activation by preventing the interaction between the primary sigma factor RpoD with the catalytic core of the RNA polymerase and with promoter DNA. May be involved in replacement of the RNA polymerase sigma subunit from RpoD to RpoS during the transition from exponential growth to the stationary phase. The protein is Regulator of sigma D of Shigella boydii serotype 4 (strain Sb227).